We begin with the raw amino-acid sequence, 556 residues long: Formate--tetrahydrofolate ligase (556 aa).

65 to 72 (TAAGEGKS) provides a ligand contact to ATP.

This sequence belongs to the formate--tetrahydrofolate ligase family.

The enzyme catalyses (6S)-5,6,7,8-tetrahydrofolate + formate + ATP = (6R)-10-formyltetrahydrofolate + ADP + phosphate. Its pathway is one-carbon metabolism; tetrahydrofolate interconversion. This Elusimicrobium minutum (strain Pei191) protein is Formate--tetrahydrofolate ligase.